Reading from the N-terminus, the 371-residue chain is Carnitine monooxygenase oxygenase subunit (371 aa).

A Rieske domain is found at Trp-44–Ile-152. Positions 86, 88, 106, and 109 each coordinate [2Fe-2S] cluster. The Fe cation site is built by His-208, His-213, and Asp-323.

The protein belongs to the bacterial ring-hydroxylating dioxygenase alpha subunit family. CntA subfamily. As to quaternary structure, composed of an oxygenase subunit (cntA) and a reductase subunit (cntB). Requires [2Fe-2S] cluster as cofactor. Fe cation serves as cofactor.

The catalysed reaction is (R)-carnitine + NADH + O2 + H(+) = (3R)-3-hydroxy-4-oxobutanoate + trimethylamine + NAD(+) + H2O. It catalyses the reaction (R)-carnitine + NADPH + O2 + H(+) = (3R)-3-hydroxy-4-oxobutanoate + trimethylamine + NADP(+) + H2O. It participates in amine and polyamine metabolism; carnitine metabolism. In terms of biological role, converts carnitine to trimethylamine and malic semialdehyde. The polypeptide is Carnitine monooxygenase oxygenase subunit (Acinetobacter baumannii (strain ATCC 19606 / DSM 30007 / JCM 6841 / CCUG 19606 / CIP 70.34 / NBRC 109757 / NCIMB 12457 / NCTC 12156 / 81)).